A 369-amino-acid polypeptide reads, in one-letter code: Nuclear pore complex-interacting protein family member A2 (369 aa).

The interval 325-346 is disordered; that stretch reads KTPPECLLTPLPPSAPPSADDN.

The protein belongs to the NPIP family.

This chain is Nuclear pore complex-interacting protein family member A2 (NPIPA2), found in Homo sapiens (Human).